We begin with the raw amino-acid sequence, 211 residues long: NADH-quinone oxidoreductase subunit I (211 aa).

Positions 21 to 41 (PTTEQYPEQKKETAPRFHGRH) are disordered. 4Fe-4S ferredoxin-type domains lie at 43 to 73 (LNRH…VEGA) and 89 to 118 (RVYQ…MSND). [4Fe-4S] cluster contacts are provided by cysteine 53, cysteine 56, cysteine 59, cysteine 63, cysteine 98, cysteine 101, cysteine 104, and cysteine 108. The disordered stretch occupies residues 141-211 (RAGMESPPHP…AHGAGSERPR (71 aa)). A compositionally biased stretch (basic and acidic residues) spans 152–166 (RLGESETDYYTRDPD). Residues 179–191 (DEADEAGEAGEAG) show a composition bias toward acidic residues. Over residues 192-211 (EAERAADKVPAHGAGSERPR) the composition is skewed to basic and acidic residues.

It belongs to the complex I 23 kDa subunit family. NDH-1 is composed of 14 different subunits. Subunits NuoA, H, J, K, L, M, N constitute the membrane sector of the complex. The cofactor is [4Fe-4S] cluster.

It localises to the cell membrane. It carries out the reaction a quinone + NADH + 5 H(+)(in) = a quinol + NAD(+) + 4 H(+)(out). Its function is as follows. NDH-1 shuttles electrons from NADH, via FMN and iron-sulfur (Fe-S) centers, to quinones in the respiratory chain. The immediate electron acceptor for the enzyme in this species is believed to be ubiquinone. Couples the redox reaction to proton translocation (for every two electrons transferred, four hydrogen ions are translocated across the cytoplasmic membrane), and thus conserves the redox energy in a proton gradient. This chain is NADH-quinone oxidoreductase subunit I, found in Parafrankia sp. (strain EAN1pec).